Reading from the N-terminus, the 483-residue chain is Glutamyl-tRNA(Gln) amidotransferase subunit A (483 aa).

Catalysis depends on charge relay system residues K75 and S150. Catalysis depends on S174, which acts as the Acyl-ester intermediate.

This sequence belongs to the amidase family. GatA subfamily. As to quaternary structure, heterotrimer of A, B and C subunits.

The enzyme catalyses L-glutamyl-tRNA(Gln) + L-glutamine + ATP + H2O = L-glutaminyl-tRNA(Gln) + L-glutamate + ADP + phosphate + H(+). Allows the formation of correctly charged Gln-tRNA(Gln) through the transamidation of misacylated Glu-tRNA(Gln) in organisms which lack glutaminyl-tRNA synthetase. The reaction takes place in the presence of glutamine and ATP through an activated gamma-phospho-Glu-tRNA(Gln). The sequence is that of Glutamyl-tRNA(Gln) amidotransferase subunit A from Legionella pneumophila subsp. pneumophila (strain Philadelphia 1 / ATCC 33152 / DSM 7513).